Consider the following 358-residue polypeptide: Homoserine O-acetyltransferase (358 aa).

The 303-residue stretch at 41–343 folds into the AB hydrolase-1 domain; the sequence is NAVLICHALT…DYGHDAFLVD (303 aa). Ser-143 functions as the Nucleophile in the catalytic mechanism. Arg-212 contacts substrate. Residues Asp-304 and His-337 contribute to the active site. Asp-338 serves as a coordination point for substrate.

Belongs to the AB hydrolase superfamily. MetX family. In terms of assembly, homodimer.

Its subcellular location is the cytoplasm. It carries out the reaction L-homoserine + acetyl-CoA = O-acetyl-L-homoserine + CoA. It participates in amino-acid biosynthesis; L-methionine biosynthesis via de novo pathway; O-acetyl-L-homoserine from L-homoserine: step 1/1. Functionally, transfers an acetyl group from acetyl-CoA to L-homoserine, forming acetyl-L-homoserine. This is Homoserine O-acetyltransferase from Haemophilus influenzae (strain 86-028NP).